We begin with the raw amino-acid sequence, 107 residues long: MSYVLIVFASLLSCGGQLCQKQAAHTRARQRVWGWLALSLVLLGCAMLLWLFVLQTVPVSVAYPMLSLNFIFITLAARFIWHEPIALRHGVGVLLIIVGIILLGGAA.

In terms of domain architecture, EamA spans 31–105; sequence RVWGWLALSL…IIVGIILLGG (75 aa). 3 helical membrane-spanning segments follow: residues 34–54, 57–77, and 85–105; these read GWLA…LFVL, VPVS…TLAA, and IALR…LLGG.

Belongs to the ArnE family. In terms of assembly, heterodimer of ArnE and ArnF.

Its subcellular location is the cell inner membrane. It functions in the pathway bacterial outer membrane biogenesis; lipopolysaccharide biosynthesis. Translocates 4-amino-4-deoxy-L-arabinose-phosphoundecaprenol (alpha-L-Ara4N-phosphoundecaprenol) from the cytoplasmic to the periplasmic side of the inner membrane. This is Probable 4-amino-4-deoxy-L-arabinose-phosphoundecaprenol flippase subunit ArnE from Enterobacter sp. (strain 638).